The primary structure comprises 254 residues: Vitamin B12 import ATP-binding protein BtuD (254 aa).

Residues 3 to 239 (INYISVGNRL…ENLQQVFETP (237 aa)) enclose the ABC transporter domain. 29–36 (GPNGSGKS) contributes to the ATP binding site.

The protein belongs to the ABC transporter superfamily. Vitamin B12 importer (TC 3.A.1.13.1) family. As to quaternary structure, the complex is composed of two ATP-binding proteins (BtuD), two transmembrane proteins (BtuC) and a solute-binding protein (BtuF).

It is found in the cell inner membrane. The enzyme catalyses an R-cob(III)alamin(out) + ATP + H2O = an R-cob(III)alamin(in) + ADP + phosphate + H(+). In terms of biological role, part of the ABC transporter complex BtuCDF involved in vitamin B12 import. Responsible for energy coupling to the transport system. This chain is Vitamin B12 import ATP-binding protein BtuD, found in Vibrio vulnificus (strain CMCP6).